A 240-amino-acid chain; its full sequence is MLIEHERGFVLHVRAWRETSLLVEVLTEQHGRVGLLARGVHGPRKQALRAALQPLQLIQFSAVQRGELAQLRQAEALDTAPRLVGDTMLAGFYISELLLRLAPRNDPVPELYACYTQARTHLAADLPLAWGLRRFERDVLEGLGFAFDLQHDSDGQPIDPAARYRLDPEEGALRVLSERLAQDRRETVTGAALLALGEDVMPAAEDMPGLRRSMRSVLLHHLGGRGLKSWEMLEDLARRR.

It belongs to the RecO family.

Involved in DNA repair and RecF pathway recombination. The sequence is that of DNA repair protein RecO from Xanthomonas oryzae pv. oryzae (strain MAFF 311018).